The primary structure comprises 247 residues: Carboxy-S-adenosyl-L-methionine synthase (247 aa).

S-adenosyl-L-methionine contacts are provided by residues tyrosine 40, 65-67 (GAS), 90-91 (DN), 122-123 (DI), asparagine 137, and arginine 204.

The protein belongs to the class I-like SAM-binding methyltransferase superfamily. Cx-SAM synthase family. As to quaternary structure, homodimer.

It catalyses the reaction prephenate + S-adenosyl-L-methionine = carboxy-S-adenosyl-L-methionine + 3-phenylpyruvate + H2O. Functionally, catalyzes the conversion of S-adenosyl-L-methionine (SAM) to carboxy-S-adenosyl-L-methionine (Cx-SAM). This is Carboxy-S-adenosyl-L-methionine synthase from Pseudomonas putida (strain W619).